Here is a 271-residue protein sequence, read N- to C-terminus: Hachiman protein HamA (271 aa).

In terms of biological role, component of antiviral defense system Hachiman, composed of HamA and HamB. Expression of Hachiman in B.subtilis (strain BEST7003) confers resistance to phages phi105, phi29, phi3T, rho14, SBSphiJ, SpBeta and SPR. This chain is Hachiman protein HamA, found in Bacillus cereus.